A 625-amino-acid chain; its full sequence is DNA-directed RNA polymerase subunit gamma (625 aa).

Zn(2+) contacts are provided by Cys-71, Cys-73, Cys-86, and Cys-89. Positions 467, 469, and 471 each coordinate Mg(2+).

Belongs to the RNA polymerase beta' chain family. RpoC1 subfamily. In cyanobacteria the RNAP catalytic core is composed of 2 alpha, 1 beta, 1 beta', 1 gamma and 1 omega subunit. When a sigma factor is associated with the core the holoenzyme is formed, which can initiate transcription. Mg(2+) serves as cofactor. Zn(2+) is required as a cofactor.

It carries out the reaction RNA(n) + a ribonucleoside 5'-triphosphate = RNA(n+1) + diphosphate. Its function is as follows. DNA-dependent RNA polymerase catalyzes the transcription of DNA into RNA using the four ribonucleoside triphosphates as substrates. The polypeptide is DNA-directed RNA polymerase subunit gamma (Nostoc punctiforme (strain ATCC 29133 / PCC 73102)).